The primary structure comprises 117 residues: MDKKELFDTVINLEEQIGSLYRQLGDLKNHIGEVIEENHQLQMENQHLRERLDQSDRDKSSETENDSAQKPGHSDIGEGHDNLARLYQEGFHICNVHYGSIRKEGDCLFCLSFLNKK.

The tract at residues 45-81 (NQHLRERLDQSDRDKSSETENDSAQKPGHSDIGEGHD) is disordered. Basic and acidic residues-rich tracts occupy residues 46–62 (QHLRERLDQSDRDKSSE) and 72–81 (GHSDIGEGHD). 4 residues coordinate Zn(2+): H92, C94, C107, and C110.

This sequence belongs to the YabA family. Homotetramer. Interacts with both DnaA and DnaN, acting as a bridge between these two proteins. Zn(2+) serves as cofactor.

It localises to the cytoplasm. It is found in the nucleoid. Its function is as follows. Involved in control of chromosome replication initiation. Inhibits the cooperative binding of DnaA to the oriC region, thus negatively regulating initiation of chromosome replication. Inhibits the ability of DnaA-ATP to form a helix on DNA; does not disassemble preformed DnaA-DNA helices. Decreases the residence time of DnaA on the chromosome at its binding sites (oriC, replication forks and promoter-binding sites). Tethers DnaA to the replication machinery via the DNA polymerase beta sliding clamp subunit (dnaN). Associates with oriC and other DnaA targets on the chromosome in a DnaA-dependent manner. This Bacillus pumilus (strain SAFR-032) protein is Replication initiation control protein YabA.